The primary structure comprises 622 residues: Kinesin light chain 2 (622 aa).

A coiled-coil region spans residues 78–143 (ILALSSHLGA…KQHLLFMSQI (66 aa)). Residues 145–164 (KLDEDASPNEEKGDVPKDTL) show a composition bias toward basic and acidic residues. Residues 145–191 (KLDEDASPNEEKGDVPKDTLDDLFPNEDEQSPAPSPGGGDVSGQHGG) are disordered. Ser-151, Ser-175, and Ser-179 each carry phosphoserine. Positions 180 to 190 (PGGGDVSGQHG) are enriched in gly residues. TPR repeat units lie at residues 198–231 (LRTLHNLVIQYASQGRYEVAVPLCKQALEDLEKT), 240–273 (ATMLNILALVYRDQNKYKEAAHLLNDALAIREKT), 282–315 (AATLNNLAVLYGKRGKYKEAEPLCKRALEIREKV), 324–357 (AKQLSNLALLCQNQGKAEEVEYYYRRALEIYATR), and 366–399 (AKTKNNLASCYLKQGKYQDAETLYKEILTRAHEK). Ser-445 is subject to Phosphoserine. Residues 449-482 (NTTLRSLGALYRRQGKLEAAHTLEDCASRNRKQG) form a TPR 6 repeat. Disordered stretches follow at residues 476–548 (SRNR…SFGK) and 563–622 (KLQG…SLVG). Basic and acidic residues predominate over residues 493-509 (ELLKDGSGRRGDRRSSR). Residues Ser-508 and Ser-521 each carry the phosphoserine modification. Low complexity predominate over residues 538-547 (GSLRRSGSFG). Phosphoserine is present on residues Ser-581, Ser-582, Ser-589, Ser-608, Ser-610, and Ser-615. Over residues 601 to 622 (LSDSRTLSSSSMDLSRRSSLVG) the composition is skewed to low complexity.

The protein belongs to the kinesin light chain family. As to quaternary structure, oligomeric complex composed of two heavy chains and two light chains. Interacts (via TPR repeats) with PLEKHM2.

Its subcellular location is the cytoplasm. It is found in the cytoskeleton. It localises to the lysosome membrane. Kinesin is a microtubule-associated force-producing protein that plays a role in organelle transport. The light chain functions in coupling of cargo to the heavy chain or in the modulation of its ATPase activity. Through binding with PLEKHM2 and ARL8B, recruits kinesin-1 to lysosomes and hence direct lysosomes movement toward microtubule plus ends. The polypeptide is Kinesin light chain 2 (Homo sapiens (Human)).